A 186-amino-acid polypeptide reads, in one-letter code: MSDNKTELNEEQHNATAEGEVSEETHQAEDAVEHDLEAMLEEARKEAESQKELALRTLADMENLKRRTRMDVESAHKFALEKFVNELLPVLDSMEMGLDASSKEDVTIDSIREGLDMTFKQFLDVMQKFNVERVNPTGEKFDPQLHEAMTMIPSPDHDSQMVIEVFQKGYVLNDRLVRPARVVVAE.

2 stretches are compositionally biased toward basic and acidic residues: residues M1–H13 and E23–H34. The interval M1–H34 is disordered.

It belongs to the GrpE family. Homodimer.

It is found in the cytoplasm. In terms of biological role, participates actively in the response to hyperosmotic and heat shock by preventing the aggregation of stress-denatured proteins, in association with DnaK and GrpE. It is the nucleotide exchange factor for DnaK and may function as a thermosensor. Unfolded proteins bind initially to DnaJ; upon interaction with the DnaJ-bound protein, DnaK hydrolyzes its bound ATP, resulting in the formation of a stable complex. GrpE releases ADP from DnaK; ATP binding to DnaK triggers the release of the substrate protein, thus completing the reaction cycle. Several rounds of ATP-dependent interactions between DnaJ, DnaK and GrpE are required for fully efficient folding. This chain is Protein GrpE, found in Hydrogenovibrio crunogenus (strain DSM 25203 / XCL-2) (Thiomicrospira crunogena).